A 792-amino-acid chain; its full sequence is Endonuclease MutS2 (792 aa).

An ATP-binding site is contributed by 334–341 (GPNTGGKT). The 76-residue stretch at 717 to 792 (INLIGKTTDE…DAGVTIATFK (76 aa)) folds into the Smr domain.

The protein belongs to the DNA mismatch repair MutS family. MutS2 subfamily. Homodimer. Binds to stalled ribosomes, contacting rRNA.

Endonuclease that is involved in the suppression of homologous recombination and thus may have a key role in the control of bacterial genetic diversity. Functionally, acts as a ribosome collision sensor, splitting the ribosome into its 2 subunits. Detects stalled/collided 70S ribosomes which it binds and splits by an ATP-hydrolysis driven conformational change. Acts upstream of the ribosome quality control system (RQC), a ribosome-associated complex that mediates the extraction of incompletely synthesized nascent chains from stalled ribosomes and their subsequent degradation. Probably generates substrates for RQC. This is Endonuclease MutS2 from Agathobacter rectalis (strain ATCC 33656 / DSM 3377 / JCM 17463 / KCTC 5835 / VPI 0990) (Eubacterium rectale).